We begin with the raw amino-acid sequence, 818 residues long: H(+)/Cl(-) exchange transporter 3 (818 aa).

The Cytoplasmic portion of the chain corresponds to 1–125; it reads MESEQLFHRG…WEMTKSLYDA (125 aa). Residues 13–17 carry the Di-leucine internalization motif; mediates targeting to late endosome and lysosome membranes motif; it reads RNSYN. An IP motif; mediates targeting to recycling endosomes motif is present at residues 18-19; sequence SI. 3 consecutive short sequence motifs (di-leucine internalization motif; mediates targeting to late endosome and lysosome membranes) follow at residues 28–29, 46–47, and 71–75; these read LL and LLDLL. A helical transmembrane segment spans residues 126–163; it reads WSGWLVVTLTGLASGALAGLIDIAADWMTDLKEGICLS. An N-linked (GlcNAc...) asparagine glycan is attached at Asn177. Residues 209-232 traverse the membrane as a helical segment; it reads MNYIMYIFWALSFAFLAVSLVKVF. The short motif at 238-242 is the Selectivity filter part_1 element; the sequence is GSGIP. Ser239 is a chloride binding site. The helical intramembrane region spans 241–248; it reads IPEIKTIL. The next 2 membrane-spanning stretches (helical) occupy residues 258–276 and 282–301; these read GKWT…VASG and EGPL…YLFP. The Selectivity filter part_2 signature appears at 280–284; sequence GKEGP. 2 consecutive intramembrane regions (helical) follow at residues 313-325 and 329-337; these read VLSA…VSVA and PIGGVLFSL. The next 3 helical transmembrane spans lie at 349–367, 391–416, and 423–443; these read LWRS…RSIN, FPFI…AWCR, and FGKY…VIAF. N-linked (GlcNAc...) asparagine glycosylation is found at Asn451 and Asn479. 2 consecutive transmembrane segments (helical) span residues 500–520 and 525–544; these read IWQL…TFGI and GLFI…VGIA. The Selectivity filter part_3 motif lies at 525 to 529; sequence GLFIP. A chloride-binding site is contributed by Phe527. 2 intramembrane regions (helical) span residues 572–586 and 590–601; these read GLYA…LGGV and TVSLVVIVFELT. An intramembrane region (note=Loop between two helices) is located at residues 602–605; that stretch reads GGLE. A helical membrane pass occupies residues 606–624; sequence YIVPLMAAVMTSKWVGDAF. The Cytoplasmic segment spans residues 625–818; it reads GREGIYEAHI…NQDPASIMFN (194 aa). Position 630 (Tyr630) interacts with chloride. CBS domains follow at residues 658–722 and 755–812; these read MRPR…ARKK and LDMS…NQDP. Residues 689-691 and 796-799 each bind ATP; these read YNG and TKKD.

It belongs to the chloride channel (TC 2.A.49) family. ClC-3/CLCN3 subfamily. In terms of assembly, monomer and homodimer. Forms heterodimers with CLCN4. In terms of processing, N-glycosylated. In terms of tissue distribution, detected in kidney, in the apical part of proximal tubule cells (at protein level). Expressed at high levels in the kidney while a low level expression is seen in the brain. Within the brain, it is prominent in the hippocampus, cerebral cortex and olfactory bulb. Brain, pancreas, kidney, liver, lung, retina, olfactory bulb, and spinal cord. As to expression, pancreas, kidney, liver, lung and retina. In terms of tissue distribution, brain, heart, pancreas, kidney, liver, lung, retina, olfactory bulb, and spinal cord. Expressed at high levels in the liver and at low levels in the brain.

It is found in the cytoplasmic vesicle. It localises to the secretory vesicle membrane. The protein localises to the lysosome membrane. The protein resides in the late endosome membrane. Its subcellular location is the cell membrane. It is found in the early endosome membrane. It localises to the recycling endosome membrane. Inhibited by Cd(2+). Its function is as follows. May influence large dense-core vesicle exocytosis in adrenal chromaffin cells. In terms of biological role, strongly outwardly rectifying, electrogenic H(+)/Cl(-)exchanger which mediates the exchange of chloride ions against protons. The CLC channel family contains both chloride channels and proton-coupled anion transporters that exchange chloride or another anion for protons. The presence of conserved gating glutamate residues is typical for family members that function as antiporters. Strongly outwardly rectifying, electrogenic H(+)/Cl(-)exchanger which mediates the exchange of chloride ions against protons. Facilitates endosomal acidification and chloride accumulation in hepatocytes. Functionally, strongly outwardly rectifying, electrogenic H(+)/Cl(-)exchanger which mediates the exchange of chloride ions against protons. The sequence is that of H(+)/Cl(-) exchange transporter 3 (Clcn3) from Mus musculus (Mouse).